The chain runs to 449 residues: GPI mannosyltransferase 2 (449 aa).

Topologically, residues 1–7 (MTEKVTK) are cytoplasmic. The helical transmembrane segment at 8 to 28 (LALASRLIVLLVQLVANGALP) threads the bilayer. The Lumenal segment spans residues 29-82 (EHKPDVFRMPVSSDQNASWIDKVIKRCLGGLRHWDGEYFLHIAENLYSYENTLA). N-linked (GlcNAc...) asparagine glycosylation occurs at asparagine 44. A helical membrane pass occupies residues 83-103 (FYPLYPVVVRHVGQAVEAIGI). The Cytoplasmic portion of the chain corresponds to 104-109 (SLSQES). Residues 110 to 130 (ILLVVAVALNFWLFCESANLL) traverse the membrane as a helical segment. The Lumenal segment spans residues 131–148 (FQLTQVLFNDLNKSWNAA). An N-linked (GlcNAc...) asparagine glycan is attached at asparagine 142. Residues 149–169 (LIYCFNPATIFFTAAYSETFF) form a helical membrane-spanning segment. At 170–196 (AYSSLHLMLECSKPTGSFRYLRLGTAL) the chain is on the cytoplasmic side. A helical membrane pass occupies residues 197–217 (AACLLCRSNGLITLGYPLYFF). The Lumenal segment spans residues 218-235 (GRQLLLKNKEPNTCMQLT). The helical transmembrane segment at 236–256 (QMTLTILGAIGILHTYYFYIY) threads the bilayer. Residues 257-368 (RLYCLPNTRP…GFKELIRDHT (112 aa)) are Cytoplasmic-facing. Residues 369–389 (TFPFVLHAAILTLVCTVYVHI) form a helical membrane-spanning segment. Residues 390-423 (QVSTRLLASATPVFYWFAADHMPKTLAQLKLRSK) lie on the Lumenal side of the membrane. Residues 424–444 (AGALFVWCTTYSLVGTVLFSN) form a helical membrane-spanning segment. Topologically, residues 445–449 (NYPWT) are cytoplasmic.

The protein belongs to the PIGV family.

It localises to the endoplasmic reticulum membrane. It participates in glycolipid biosynthesis; glycosylphosphatidylinositol-anchor biosynthesis. Its function is as follows. Mannosyltransferase involved in glycosylphosphatidylinositol-anchor biosynthesis. Transfers the second mannose to the glycosylphosphatidylinositol during GPI precursor assembly. Required for the GPI-mediated endoplasmic reticulum exit and proper targeting to the cell surface of chp. Required for GPI-mediated membrane attachment of chp, qsm and Cont. Essential for microvillar stability in the rhabdomere. This is GPI mannosyltransferase 2 from Drosophila melanogaster (Fruit fly).